We begin with the raw amino-acid sequence, 386 residues long: tRNA N6-adenosine threonylcarbamoyltransferase (386 aa).

The Fe cation site is built by histidine 112 and histidine 116. Substrate is bound by residues 134 to 138 (LASGG), aspartate 167, glycine 180, and asparagine 322. A Fe cation-binding site is contributed by aspartate 350.

It belongs to the KAE1 / TsaD family. Fe(2+) is required as a cofactor.

It is found in the cytoplasm. It catalyses the reaction L-threonylcarbamoyladenylate + adenosine(37) in tRNA = N(6)-L-threonylcarbamoyladenosine(37) in tRNA + AMP + H(+). In terms of biological role, required for the formation of a threonylcarbamoyl group on adenosine at position 37 (t(6)A37) in tRNAs that read codons beginning with adenine. Is involved in the transfer of the threonylcarbamoyl moiety of threonylcarbamoyl-AMP (TC-AMP) to the N6 group of A37, together with TsaE and TsaB. TsaD likely plays a direct catalytic role in this reaction. This chain is tRNA N6-adenosine threonylcarbamoyltransferase, found in Rickettsia akari (strain Hartford).